Consider the following 398-residue polypeptide: Steroid C26-monooxygenase (398 aa).

Cys-340 provides a ligand contact to heme.

Belongs to the cytochrome P450 family. Heme is required as a cofactor.

The catalysed reaction is cholest-4-en-3-one + 6 reduced [2Fe-2S]-[ferredoxin] + 3 O2 + 5 H(+) = (25R)-3-oxocholest-4-en-26-oate + 6 oxidized [2Fe-2S]-[ferredoxin] + 4 H2O. It carries out the reaction cholest-4-en-3-one + 2 reduced [2Fe-2S]-[ferredoxin] + O2 + 2 H(+) = (25R)-3-oxocholest-4-en-26-ol + 2 oxidized [2Fe-2S]-[ferredoxin] + H2O. It catalyses the reaction (25R)-3-oxocholest-4-en-26-ol + 2 reduced [2Fe-2S]-[ferredoxin] + O2 + 2 H(+) = (25R)-3-oxocholest-4-en-26-al + 2 oxidized [2Fe-2S]-[ferredoxin] + 2 H2O. The enzyme catalyses (25R)-3-oxocholest-4-en-26-al + 2 reduced [2Fe-2S]-[ferredoxin] + O2 + H(+) = (25R)-3-oxocholest-4-en-26-oate + 2 oxidized [2Fe-2S]-[ferredoxin] + H2O. The catalysed reaction is cholesterol + NADPH + O2 + H(+) = 26-hydroxycholesterol + NADP(+) + H2O. It carries out the reaction 26-hydroxycholesterol + 2 reduced [2Fe-2S]-[ferredoxin] + O2 + 2 H(+) = (3beta)-hydroxy-cholest-5-en-26-al + 2 oxidized [2Fe-2S]-[ferredoxin] + 2 H2O. It catalyses the reaction (3beta)-hydroxy-cholest-5-en-26-al + NADPH + O2 = (3beta)-hydroxy-cholest-5-en-26-oate + NADP(+) + H2O. The enzyme catalyses (25S)-3-oxocholest-4-en-26-ol + 2 reduced [2Fe-2S]-[ferredoxin] + O2 + 2 H(+) = (25S)-3-oxocholest-4-en-26-al + 2 oxidized [2Fe-2S]-[ferredoxin] + 2 H2O. The catalysed reaction is (25S)-3-oxocholest-4-en-26-al + 2 reduced [2Fe-2S]-[ferredoxin] + O2 + H(+) = (25S)-3-oxocholest-4-en-26-oate + 2 oxidized [2Fe-2S]-[ferredoxin] + H2O. It participates in steroid metabolism; cholesterol degradation. With respect to regulation, inhibited by econazole, clotrimazole and miconazole. In terms of biological role, involved in the utilization of cholesterol as the sole carbon and energy source by degrading the side chain during infection. Primarily catalyzes the sequential oxidation of the terminal methyl of cholest-4-en-3-one into (25R)-26-hydroxycholest-4-en-3-one (alcohol), (25R)-26-oxocholest-4-en-3-one (aldehyde), to finally yield the carboxylic acid (25R)-3-oxocholest-4-en-26-oate. In vitro, Cyp142 catalyzes with equal preference the oxidation of both (25R)- and (25S)-26-hydroxycholest-4-en-3-one diastereomers to the corresponding carboxylic acid which is a prerequisite for entry into the beta-oxidation pathway. Also able to sequentially oxidize cholesterol itself, not only cholest-4-en-3-one. This chain is Steroid C26-monooxygenase (cyp142), found in Mycobacterium tuberculosis (strain ATCC 25618 / H37Rv).